An 82-amino-acid polypeptide reads, in one-letter code: Small ribosomal subunit protein eS27 (82 aa).

Residues Cys37, Cys40, Cys56, and Cys59 each contribute to the Zn(2+) site.

It belongs to the eukaryotic ribosomal protein eS27 family. Component of the small ribosomal subunit. Mature ribosomes consist of a small (40S) and a large (60S) subunit. The 40S subunit contains about 32 different proteins and 1 molecule of RNA (18S). The 60S subunit contains 45 different proteins and 3 molecules of RNA (25S, 5.8S and 5S). It depends on Zn(2+) as a cofactor.

The protein localises to the cytoplasm. Functionally, component of the ribosome, a large ribonucleoprotein complex responsible for the synthesis of proteins in the cell. The small ribosomal subunit (SSU) binds messenger RNAs (mRNAs) and translates the encoded message by selecting cognate aminoacyl-transfer RNA (tRNA) molecules. The large subunit (LSU) contains the ribosomal catalytic site termed the peptidyl transferase center (PTC), which catalyzes the formation of peptide bonds, thereby polymerizing the amino acids delivered by tRNAs into a polypeptide chain. The nascent polypeptides leave the ribosome through a tunnel in the LSU and interact with protein factors that function in enzymatic processing, targeting, and the membrane insertion of nascent chains at the exit of the ribosomal tunnel. The sequence is that of Small ribosomal subunit protein eS27 (RPS27) from Candida albicans (strain SC5314 / ATCC MYA-2876) (Yeast).